The primary structure comprises 318 residues: Ribosomal protein L11 methyltransferase (318 aa).

S-adenosyl-L-methionine-binding residues include Thr159, Gly180, Asp202, and Asn253.

Belongs to the methyltransferase superfamily. PrmA family.

The protein localises to the cytoplasm. The enzyme catalyses L-lysyl-[protein] + 3 S-adenosyl-L-methionine = N(6),N(6),N(6)-trimethyl-L-lysyl-[protein] + 3 S-adenosyl-L-homocysteine + 3 H(+). Functionally, methylates ribosomal protein L11. The protein is Ribosomal protein L11 methyltransferase of Lachnospira eligens (strain ATCC 27750 / DSM 3376 / VPI C15-48 / C15-B4) (Eubacterium eligens).